Here is a 143-residue protein sequence, read N- to C-terminus: uncharacterized protein (143 aa).

Cys12 is a catalytic residue.

The protein belongs to the ArsC family.

This is an uncharacterized protein from Rhodospirillum rubrum.